The sequence spans 277 residues: MARCDVLVSADWAESNLHAPKVVFVEVDEDTSAYDRDHIAGAIKLDWRTDLQDPVKRDFVDAQQFSKLLSERGIANEDTVILYGGNNNWFAAYAYWYFKLYGHEKVKLLDGGRKKWELDGRPLSSDPVSRPVTSYTASPPDNTIRAFRDEVLAAINVKNLIDVRSPDEFSGKILAPAHLPQEQSQRPGHIPGAINVPWSRAANEDGTFKSDEELAKLYADAGLDNSKETIAYCRIGERSSHTWFVLRELLGHQNVKNYDGSWTEYGSLVGAPIELGS.

Rhodanese domains follow at residues 18-125 (HAPK…PLSS) and 154-274 (AINV…APIE). The active-site Cysteine persulfide intermediate is the cysteine 233. A substrate-binding site is contributed by arginine 238.

It carries out the reaction thiosulfate + hydrogen cyanide = thiocyanate + sulfite + 2 H(+). Functionally, may be a sulfotransferase involved in the formation of thiosulfate. The polypeptide is Putative thiosulfate sulfurtransferase (cysA1) (Mycobacterium tuberculosis (strain CDC 1551 / Oshkosh)).